Here is an 861-residue protein sequence, read N- to C-terminus: Glucans biosynthesis glucosyltransferase H (861 aa).

Disordered stretches follow at residues 65 to 89 (RLSAREPAKGETPEPGGSTYGSVGR) and 101 to 129 (AGEPLLKRRPDGTVHVDTGPEPQRSSMVP). 2 stretches are compositionally biased toward basic and acidic residues: residues 67–76 (SAREPAKGET) and 105–114 (LLKRRPDGTV). Helical transmembrane passes span 181 to 201 (FLLGLVVAQTTLATYFMTKVL), 208 to 228 (LLEIAILVLFAVLFSWVSAGF), 532 to 552 (VFLTGIMAYLSAPLWFLFLLL), 589 to 609 (LFSATATLLFLPKVASILLLV), 616 to 636 (GGLPRLVMSMLIEVVLSALLA), and 698 to 718 (FVLWLLPIVGSLALSIPLSVM).

The protein belongs to the glycosyltransferase 2 family. OpgH subfamily.

The protein localises to the cell inner membrane. It participates in glycan metabolism; osmoregulated periplasmic glucan (OPG) biosynthesis. Functionally, involved in the biosynthesis of osmoregulated periplasmic glucans (OPGs). This Cupriavidus pinatubonensis (strain JMP 134 / LMG 1197) (Cupriavidus necator (strain JMP 134)) protein is Glucans biosynthesis glucosyltransferase H.